The primary structure comprises 158 residues: Endoribonuclease YbeY (158 aa).

Zn(2+) contacts are provided by H117, H121, and H127.

It belongs to the endoribonuclease YbeY family. Zn(2+) serves as cofactor.

It localises to the cytoplasm. In terms of biological role, single strand-specific metallo-endoribonuclease involved in late-stage 70S ribosome quality control and in maturation of the 3' terminus of the 16S rRNA. The chain is Endoribonuclease YbeY from Francisella philomiragia subsp. philomiragia (strain ATCC 25017 / CCUG 19701 / FSC 153 / O#319-036).